The following is a 128-amino-acid chain: Adrenodoxin (128 aa).

Ser-3 carries the phosphoserine modification. Position 6 is an N6-acetyllysine; alternate (Lys-6). Position 6 is an N6-succinyllysine; alternate (Lys-6). Residues 7 to 111 (VTVNFINRDG…NMTVRVPDAV (105 aa)) enclose the 2Fe-2S ferredoxin-type domain. [2Fe-2S] cluster contacts are provided by Cys-46, Cys-52, Cys-55, and Cys-92. Residue Lys-98 is modified to N6-succinyllysine. Ser-117 is modified (phosphoserine).

Belongs to the adrenodoxin/putidaredoxin family. Interacts with CYP11A1. The cofactor is [2Fe-2S] cluster.

The protein localises to the mitochondrion matrix. Essential for the synthesis of various steroid hormones. Participates in the reduction of mitochondrial cytochrome P450 for steroidogenesis. Transfers electrons from adrenodoxin reductase to CYP11A1, a cytochrome P450 that catalyzes cholesterol side-chain cleavage. Does not form a ternary complex with adrenodoxin reductase and CYP11A1 but shuttles between the two enzymes to transfer electrons. This Ovis aries (Sheep) protein is Adrenodoxin (FDX1).